An 89-amino-acid chain; its full sequence is Small ribosomal subunit protein uS15 (89 aa).

It belongs to the universal ribosomal protein uS15 family. As to quaternary structure, part of the 30S ribosomal subunit. Forms a bridge to the 50S subunit in the 70S ribosome, contacting the 23S rRNA.

Its function is as follows. One of the primary rRNA binding proteins, it binds directly to 16S rRNA where it helps nucleate assembly of the platform of the 30S subunit by binding and bridging several RNA helices of the 16S rRNA. In terms of biological role, forms an intersubunit bridge (bridge B4) with the 23S rRNA of the 50S subunit in the ribosome. The sequence is that of Small ribosomal subunit protein uS15 from Cupriavidus pinatubonensis (strain JMP 134 / LMG 1197) (Cupriavidus necator (strain JMP 134)).